The chain runs to 580 residues: L-aspartate oxidase (580 aa).

FAD contacts are provided by residues 26 to 29, lysine 49, 56 to 63, and aspartate 227; these read SGVA and STRWAQGG. Arginine 297 (proton donor/acceptor) is an active-site residue. FAD is bound by residues glutamate 382 and 398-399; that span reads SL. Residues 556-580 form a disordered region; sequence VHTTDTPEFPPTVHGAQPTHRPQEQ.

This sequence belongs to the FAD-dependent oxidoreductase 2 family. NadB subfamily. The cofactor is FAD.

The protein resides in the cytoplasm. The enzyme catalyses L-aspartate + O2 = iminosuccinate + H2O2. It participates in cofactor biosynthesis; NAD(+) biosynthesis; iminoaspartate from L-aspartate (oxidase route): step 1/1. Functionally, catalyzes the oxidation of L-aspartate to iminoaspartate, the first step in the de novo biosynthesis of NAD(+). This Streptomyces coelicolor (strain ATCC BAA-471 / A3(2) / M145) protein is L-aspartate oxidase (nadB).